We begin with the raw amino-acid sequence, 164 residues long: Transcription antitermination protein NusB (164 aa).

The segment at 144–164 (KNGRGLIDHTPPRAAKTDAKS) is disordered. Over residues 149–164 (LIDHTPPRAAKTDAKS) the composition is skewed to basic and acidic residues.

This sequence belongs to the NusB family.

Its function is as follows. Involved in transcription antitermination. Required for transcription of ribosomal RNA (rRNA) genes. Binds specifically to the boxA antiterminator sequence of the ribosomal RNA (rrn) operons. This Chlorobium phaeovibrioides (strain DSM 265 / 1930) (Prosthecochloris vibrioformis (strain DSM 265)) protein is Transcription antitermination protein NusB.